The following is a 166-amino-acid chain: Large ribosomal subunit protein uL10 (166 aa).

It belongs to the universal ribosomal protein uL10 family. As to quaternary structure, part of the ribosomal stalk of the 50S ribosomal subunit. The N-terminus interacts with L11 and the large rRNA to form the base of the stalk. The C-terminus forms an elongated spine to which L12 dimers bind in a sequential fashion forming a multimeric L10(L12)X complex.

In terms of biological role, forms part of the ribosomal stalk, playing a central role in the interaction of the ribosome with GTP-bound translation factors. This chain is Large ribosomal subunit protein uL10, found in Bacillus velezensis (strain DSM 23117 / BGSC 10A6 / LMG 26770 / FZB42) (Bacillus amyloliquefaciens subsp. plantarum).